Here is a 79-residue protein sequence, read N- to C-terminus: Exodeoxyribonuclease 7 small subunit (79 aa).

The protein belongs to the XseB family. As to quaternary structure, heterooligomer composed of large and small subunits.

It localises to the cytoplasm. The catalysed reaction is Exonucleolytic cleavage in either 5'- to 3'- or 3'- to 5'-direction to yield nucleoside 5'-phosphates.. Bidirectionally degrades single-stranded DNA into large acid-insoluble oligonucleotides, which are then degraded further into small acid-soluble oligonucleotides. This Lactococcus lactis subsp. cremoris (strain MG1363) protein is Exodeoxyribonuclease 7 small subunit.